A 176-amino-acid chain; its full sequence is Protein GrpE (176 aa).

The tract at residues 1–28 is disordered; sequence MSEQKQEFENENAENSEHLQDENLQNIE.

Belongs to the GrpE family. Homodimer.

Its subcellular location is the cytoplasm. In terms of biological role, participates actively in the response to hyperosmotic and heat shock by preventing the aggregation of stress-denatured proteins, in association with DnaK and GrpE. It is the nucleotide exchange factor for DnaK and may function as a thermosensor. Unfolded proteins bind initially to DnaJ; upon interaction with the DnaJ-bound protein, DnaK hydrolyzes its bound ATP, resulting in the formation of a stable complex. GrpE releases ADP from DnaK; ATP binding to DnaK triggers the release of the substrate protein, thus completing the reaction cycle. Several rounds of ATP-dependent interactions between DnaJ, DnaK and GrpE are required for fully efficient folding. The chain is Protein GrpE from Campylobacter jejuni subsp. jejuni serotype O:2 (strain ATCC 700819 / NCTC 11168).